Reading from the N-terminus, the 132-residue chain is Ribosome-binding factor A (132 aa).

Belongs to the RbfA family. In terms of assembly, monomer. Binds 30S ribosomal subunits, but not 50S ribosomal subunits or 70S ribosomes.

The protein resides in the cytoplasm. Its function is as follows. One of several proteins that assist in the late maturation steps of the functional core of the 30S ribosomal subunit. Associates with free 30S ribosomal subunits (but not with 30S subunits that are part of 70S ribosomes or polysomes). Required for efficient processing of 16S rRNA. May interact with the 5'-terminal helix region of 16S rRNA. This chain is Ribosome-binding factor A, found in Prochlorococcus marinus subsp. pastoris (strain CCMP1986 / NIES-2087 / MED4).